Consider the following 1005-residue polypeptide: DNA-directed RNA polymerase subunit beta (1005 aa).

The protein belongs to the RNA polymerase beta chain family. In terms of assembly, in plastids the minimal PEP RNA polymerase catalytic core is composed of four subunits: alpha, beta, beta', and beta''. When a (nuclear-encoded) sigma factor is associated with the core the holoenzyme is formed, which can initiate transcription (Potential).

The protein localises to the plastid. It is found in the apicoplast. The enzyme catalyses RNA(n) + a ribonucleoside 5'-triphosphate = RNA(n+1) + diphosphate. In terms of biological role, DNA-dependent RNA polymerase catalyzes the transcription of DNA into RNA using the four ribonucleoside triphosphates as substrates. The protein is DNA-directed RNA polymerase subunit beta (rpoB) of Theileria parva (East coast fever infection agent).